Consider the following 734-residue polypeptide: Ribosome-releasing factor 2, mitochondrial (734 aa).

Residues 1–25 constitute a mitochondrion transit peptide; that stretch reads MLQYCLLRRYRFLLRQHAQVIKRCY. The tr-type G domain occupies 27 to 303; that stretch reads GDIRNIGILA…AVNAYLPMPE (277 aa). Residues 36 to 43, 100 to 104, and 154 to 157 each bind GTP; these read AHIDAGKT, DTPGH, and NKMD.

It belongs to the TRAFAC class translation factor GTPase superfamily. Classic translation factor GTPase family. EF-G/EF-2 subfamily.

It localises to the mitochondrion. Functionally, mitochondrial GTPase that mediates the disassembly of ribosomes from messenger RNA at the termination of mitochondrial protein biosynthesis. Not involved in the GTP-dependent ribosomal translocation step during translation elongation. The sequence is that of Ribosome-releasing factor 2, mitochondrial from Drosophila grimshawi (Hawaiian fruit fly).